Reading from the N-terminus, the 82-residue chain is Small ribosomal subunit protein uS17 (82 aa).

This sequence belongs to the universal ribosomal protein uS17 family. Part of the 30S ribosomal subunit.

One of the primary rRNA binding proteins, it binds specifically to the 5'-end of 16S ribosomal RNA. The protein is Small ribosomal subunit protein uS17 of Shewanella denitrificans (strain OS217 / ATCC BAA-1090 / DSM 15013).